A 118-amino-acid chain; its full sequence is Small ribosomal subunit protein uS13 (118 aa).

The interval 94 to 118 (GLPLRGQRTKTNARTRKGRRKGTSS) is disordered.

Belongs to the universal ribosomal protein uS13 family. As to quaternary structure, part of the 30S ribosomal subunit. Forms a loose heterodimer with protein S19. Forms two bridges to the 50S subunit in the 70S ribosome.

Functionally, located at the top of the head of the 30S subunit, it contacts several helices of the 16S rRNA. In the 70S ribosome it contacts the 23S rRNA (bridge B1a) and protein L5 of the 50S subunit (bridge B1b), connecting the 2 subunits; these bridges are implicated in subunit movement. Contacts the tRNAs in the A and P-sites. In Legionella pneumophila (strain Paris), this protein is Small ribosomal subunit protein uS13.